We begin with the raw amino-acid sequence, 48 residues long: Cytochrome c oxidase subunit 2 (48 aa).

The Mitochondrial intermembrane segment spans residues 1-14; that stretch reads MAHPAQLGLQDASS. Residues 15–45 traverse the membrane as a helical segment; sequence PIXEELLHFHEDALMIVFLISTLVLYIITTT. Residues 46-48 lie on the Mitochondrial matrix side of the membrane; that stretch reads VST.

Belongs to the cytochrome c oxidase subunit 2 family. Component of the cytochrome c oxidase (complex IV, CIV), a multisubunit enzyme composed of 14 subunits. The complex is composed of a catalytic core of 3 subunits MT-CO1, MT-CO2 and MT-CO3, encoded in the mitochondrial DNA, and 11 supernumerary subunits COX4I, COX5A, COX5B, COX6A, COX6B, COX6C, COX7A, COX7B, COX7C, COX8 and NDUFA4, which are encoded in the nuclear genome. The complex exists as a monomer or a dimer and forms supercomplexes (SCs) in the inner mitochondrial membrane with NADH-ubiquinone oxidoreductase (complex I, CI) and ubiquinol-cytochrome c oxidoreductase (cytochrome b-c1 complex, complex III, CIII), resulting in different assemblies (supercomplex SCI(1)III(2)IV(1) and megacomplex MCI(2)III(2)IV(2)). Found in a complex with TMEM177, COA6, COX18, COX20, SCO1 and SCO2. Interacts with TMEM177 in a COX20-dependent manner. Interacts with COX20. Interacts with COX16. It depends on Cu cation as a cofactor.

It is found in the mitochondrion inner membrane. The enzyme catalyses 4 Fe(II)-[cytochrome c] + O2 + 8 H(+)(in) = 4 Fe(III)-[cytochrome c] + 2 H2O + 4 H(+)(out). Its function is as follows. Component of the cytochrome c oxidase, the last enzyme in the mitochondrial electron transport chain which drives oxidative phosphorylation. The respiratory chain contains 3 multisubunit complexes succinate dehydrogenase (complex II, CII), ubiquinol-cytochrome c oxidoreductase (cytochrome b-c1 complex, complex III, CIII) and cytochrome c oxidase (complex IV, CIV), that cooperate to transfer electrons derived from NADH and succinate to molecular oxygen, creating an electrochemical gradient over the inner membrane that drives transmembrane transport and the ATP synthase. Cytochrome c oxidase is the component of the respiratory chain that catalyzes the reduction of oxygen to water. Electrons originating from reduced cytochrome c in the intermembrane space (IMS) are transferred via the dinuclear copper A center (CU(A)) of subunit 2 and heme A of subunit 1 to the active site in subunit 1, a binuclear center (BNC) formed by heme A3 and copper B (CU(B)). The BNC reduces molecular oxygen to 2 water molecules using 4 electrons from cytochrome c in the IMS and 4 protons from the mitochondrial matrix. This Polypterus sp. (Bichir) protein is Cytochrome c oxidase subunit 2 (mt-co2).